The chain runs to 494 residues: Tripartite motif-containing protein 5 (494 aa).

Ala2 is subject to N-acetylalanine. Residues 15-59 (CPICLELLTEPLSLDCGHSFCQACITANHKESTPHQGERSCPLCR) form an RING-type zinc finger. At Ser86 the chain carries Phosphoserine. The B box-type zinc finger occupies 91-132 (QKVGHCARHGEKLLLFCEQDGNVICWLCERSQEHRGHHTLLV). Zn(2+) is bound by residues Cys96, His99, Cys118, and His124. Residues 131-223 (LVEEVAEKYQ…RLVQSESDMV (93 aa)) adopt a coiled-coil conformation. Positions 186-199 (FKQLRDILDCEESK) are required for interaction with GABARAP and for autophagy. In terms of domain architecture, B30.2/SPRY spans 280–494 (PDLKAMLQAF…LPMTLCSPSS (215 aa)).

Belongs to the TRIM/RBCC family. In terms of assembly, can form homodimers and homotrimers. In addition to lower-order dimerization, also exhibits a higher-order multimerization and both low- and high-order multimerizations are essential for its restriction activity. Interacts with BTBD1 and BTBD2. Interacts with PSMC4, PSMC5, PSMD7 and HSPA8/HSC70. Interacts (via B30.2/SPRY domain) with HSPA1A/B. Interacts with PSMC2, MAP3K7/TAK1, TAB2 and TAB3. Interacts with SQSTM1. Interacts with TRIM6 and TRIM34. Interacts with ULK1 (phosphorylated form), GABARAP, GABARAPL1, GABARAPL2, MAP1LC3A, MAP1LC3C and BECN1. In terms of processing, degraded in a proteasome-independent fashion in the absence of viral infection but in a proteasome-dependent fashion following exposure to restriction sensitive virus. Post-translationally, autoubiquitinated in a RING finger- and UBE2D2-dependent manner. Monoubiquitinated by TRIM21. Deubiquitinated by Yersinia YopJ. Ubiquitination may not lead to proteasomal degradation.

The protein localises to the cytoplasm. The protein resides in the nucleus. The catalysed reaction is S-ubiquitinyl-[E2 ubiquitin-conjugating enzyme]-L-cysteine + [acceptor protein]-L-lysine = [E2 ubiquitin-conjugating enzyme]-L-cysteine + N(6)-ubiquitinyl-[acceptor protein]-L-lysine.. Its pathway is protein modification; protein ubiquitination. Functionally, capsid-specific restriction factor that prevents infection from non-host-adapted retroviruses. Blocks viral replication early in the life cycle, after viral entry but before reverse transcription. In addition to acting as a capsid-specific restriction factor, also acts as a pattern recognition receptor that activates innate immune signaling in response to the retroviral capsid lattice. Binding to the viral capsid triggers its E3 ubiquitin ligase activity, and in concert with the heterodimeric ubiquitin conjugating enzyme complex UBE2V1-UBE2N (also known as UBC13-UEV1A complex) generates 'Lys-63'-linked polyubiquitin chains, which in turn are catalysts in the autophosphorylation of the MAP3K7/TAK1 complex (includes TAK1, TAB2, and TAB3). Activation of the MAP3K7/TAK1 complex by autophosphorylation results in the induction and expression of NF-kappa-B and MAPK-responsive inflammatory genes, thereby leading to an innate immune response in the infected cell. Plays a role in regulating autophagy through activation of autophagy regulator BECN1 by causing its dissociation from its inhibitors BCL2 and TAB2. This Saguinus labiatus (Red-chested mustached tamarin) protein is Tripartite motif-containing protein 5 (TRIM5).